The following is a 430-amino-acid chain: Asparagine--tRNA ligase (430 aa).

The protein belongs to the class-II aminoacyl-tRNA synthetase family. In terms of assembly, homodimer.

It localises to the cytoplasm. The enzyme catalyses tRNA(Asn) + L-asparagine + ATP = L-asparaginyl-tRNA(Asn) + AMP + diphosphate + H(+). The sequence is that of Asparagine--tRNA ligase from Staphylococcus aureus (strain MW2).